We begin with the raw amino-acid sequence, 413 residues long: Arginine biosynthesis bifunctional protein ArgJ (413 aa).

Residues Thr-160, Lys-186, Thr-197, Glu-284, Asn-408, and Ser-413 each coordinate substrate. The active-site Nucleophile is the Thr-197.

Belongs to the ArgJ family. In terms of assembly, heterotetramer of two alpha and two beta chains.

The protein localises to the cytoplasm. It carries out the reaction N(2)-acetyl-L-ornithine + L-glutamate = N-acetyl-L-glutamate + L-ornithine. The catalysed reaction is L-glutamate + acetyl-CoA = N-acetyl-L-glutamate + CoA + H(+). It functions in the pathway amino-acid biosynthesis; L-arginine biosynthesis; L-ornithine and N-acetyl-L-glutamate from L-glutamate and N(2)-acetyl-L-ornithine (cyclic): step 1/1. The protein operates within amino-acid biosynthesis; L-arginine biosynthesis; N(2)-acetyl-L-ornithine from L-glutamate: step 1/4. Functionally, catalyzes two activities which are involved in the cyclic version of arginine biosynthesis: the synthesis of N-acetylglutamate from glutamate and acetyl-CoA as the acetyl donor, and of ornithine by transacetylation between N(2)-acetylornithine and glutamate. The sequence is that of Arginine biosynthesis bifunctional protein ArgJ from Burkholderia pseudomallei (strain K96243).